The chain runs to 519 residues: Alternative NAD(P)H-ubiquinone oxidoreductase C1, chloroplastic/mitochondrial (519 aa).

The transit peptide at 1 to 52 directs the protein to the chloroplast and mitochondrion; the sequence is MAVLSSVSSLIPFSYGATRLTSKASLASRTSGFNLSSRWNSTRNSPMLYLSR. Residue 82 to 118 coordinates FAD; the sequence is RVCILGGGFGGLYTALRLESLVWPEDKKPQVVLVDQS. Residue 246–282 coordinates NAD(+); sequence IKVAVVGCGYAGVELAATISERLQDRGIVQSINVSKN.

Belongs to the NADH dehydrogenase family. The cofactor is FAD. In terms of tissue distribution, flowers, roots, leaves and stems.

The protein localises to the mitochondrion. Its subcellular location is the mitochondrion inner membrane. The protein resides in the plastid. It is found in the chloroplast. It localises to the plastoglobule. It carries out the reaction a quinone + NADH + H(+) = a quinol + NAD(+). It catalyses the reaction a ubiquinone + NADH + H(+) = a ubiquinol + NAD(+). The enzyme catalyses demethylphylloquinone + NADPH + H(+) = demethylphylloquinol + NADP(+). Inhibited by dicumarol. Bifunctional oxidoreductase ables to act both on prenyl naphthoquinones and on prenyl benzoquinones. May serve a respiratory function. Involved in an electron flow toward the plastoglobule plastoquinone pool. Required for plastochromanol-8 accumulation and for phylloquinone (vitamin K1) production. Probably not directly involved in cyclic or chlororespiratory electron flows under standard growth conditions, but participates in the redox metabolism of plastoquinone-9 and the tocophrol recycling-intermediate alpha-tocopherol quinone. Catalyzes the penultimate step in the biosynthesis of vitamin K1. In Arabidopsis thaliana (Mouse-ear cress), this protein is Alternative NAD(P)H-ubiquinone oxidoreductase C1, chloroplastic/mitochondrial.